Consider the following 233-residue polypeptide: Large ribosomal subunit protein uL1 (233 aa).

This sequence belongs to the universal ribosomal protein uL1 family. Part of the 50S ribosomal subunit.

Functionally, binds directly to 23S rRNA. The L1 stalk is quite mobile in the ribosome, and is involved in E site tRNA release. In terms of biological role, protein L1 is also a translational repressor protein, it controls the translation of the L11 operon by binding to its mRNA. The protein is Large ribosomal subunit protein uL1 of Vibrio cholerae serotype O1 (strain ATCC 39315 / El Tor Inaba N16961).